We begin with the raw amino-acid sequence, 308 residues long: Pseudouridine-5'-phosphate glycosidase (308 aa).

The Proton donor role is filled by glutamate 26. Substrate is bound by residues lysine 87 and valine 107. Aspartate 139 serves as a coordination point for Mn(2+). Residue 141–143 (SAD) coordinates substrate. Lysine 160 serves as the catalytic Nucleophile.

The protein belongs to the pseudouridine-5'-phosphate glycosidase family. In terms of assembly, homotrimer. The cofactor is Mn(2+).

It catalyses the reaction D-ribose 5-phosphate + uracil = psi-UMP + H2O. In terms of biological role, catalyzes the reversible cleavage of pseudouridine 5'-phosphate (PsiMP) to ribose 5-phosphate and uracil. Functions biologically in the cleavage direction, as part of a pseudouridine degradation pathway. The protein is Pseudouridine-5'-phosphate glycosidase of Legionella pneumophila subsp. pneumophila (strain Philadelphia 1 / ATCC 33152 / DSM 7513).